A 297-amino-acid chain; its full sequence is Palmitoyl-protein thioesterase ABHD10, mitochondrial (297 aa).

A mitochondrion-targeting transit peptide spans 1-43 (MAAWAPCRRWGWAAVSFGRHPGLSASLARKPPRAWWLSACRQK). One can recognise an AB hydrolase-1 domain in the interval 69-196 (IIFIPGYLSN…EIEMKGEWTL (128 aa)). Residues S143, D240, and H270 each act as charge relay system in the active site.

It belongs to the AB hydrolase superfamily.

It is found in the mitochondrion. The enzyme catalyses S-hexadecanoyl-L-cysteinyl-[protein] + H2O = L-cysteinyl-[protein] + hexadecanoate + H(+). It carries out the reaction mycophenolic acid O-acyl-beta-D-glucuronide + H2O = mycophenolate + D-glucuronate + H(+). Inhibited by palmostatin-B. Functionally, acts as an acyl-protein thioesterase that hydrolyzes fatty acids from acylated residues in proteins. Regulates the mitochondrial S-depalmitoylation of the nucleophilic active site residue of peroxiredoxin-5/PRDX5, a key antioxidant protein, therefore modulating mitochondrial antioxidant ability. Also catalyzes the deglucuronidation of mycophenolic acid acyl-glucuronide, an active metabolite of the immunosuppressant drug mycophenolate. The chain is Palmitoyl-protein thioesterase ABHD10, mitochondrial from Mus musculus (Mouse).